Consider the following 293-residue polypeptide: Phosphatidylserine decarboxylase proenzyme (293 aa).

Residues D90, H147, and S254 each act as charge relay system; for autoendoproteolytic cleavage activity in the active site. S254 functions as the Schiff-base intermediate with substrate; via pyruvic acid; for decarboxylase activity in the catalytic mechanism. S254 is subject to Pyruvic acid (Ser); by autocatalysis.

The protein belongs to the phosphatidylserine decarboxylase family. PSD-B subfamily. Prokaryotic type I sub-subfamily. In terms of assembly, heterodimer of a large membrane-associated beta subunit and a small pyruvoyl-containing alpha subunit. It depends on pyruvate as a cofactor. In terms of processing, is synthesized initially as an inactive proenzyme. Formation of the active enzyme involves a self-maturation process in which the active site pyruvoyl group is generated from an internal serine residue via an autocatalytic post-translational modification. Two non-identical subunits are generated from the proenzyme in this reaction, and the pyruvate is formed at the N-terminus of the alpha chain, which is derived from the carboxyl end of the proenzyme. The autoendoproteolytic cleavage occurs by a canonical serine protease mechanism, in which the side chain hydroxyl group of the serine supplies its oxygen atom to form the C-terminus of the beta chain, while the remainder of the serine residue undergoes an oxidative deamination to produce ammonia and the pyruvoyl prosthetic group on the alpha chain. During this reaction, the Ser that is part of the protease active site of the proenzyme becomes the pyruvoyl prosthetic group, which constitutes an essential element of the active site of the mature decarboxylase.

The protein resides in the cell membrane. It catalyses the reaction a 1,2-diacyl-sn-glycero-3-phospho-L-serine + H(+) = a 1,2-diacyl-sn-glycero-3-phosphoethanolamine + CO2. It participates in phospholipid metabolism; phosphatidylethanolamine biosynthesis; phosphatidylethanolamine from CDP-diacylglycerol: step 2/2. In terms of biological role, catalyzes the formation of phosphatidylethanolamine (PtdEtn) from phosphatidylserine (PtdSer). The chain is Phosphatidylserine decarboxylase proenzyme from Yersinia pseudotuberculosis serotype O:1b (strain IP 31758).